Here is a 641-residue protein sequence, read N- to C-terminus: Fructose-1,6-bisphosphatase class 3 (641 aa).

It belongs to the FBPase class 3 family. It depends on Mn(2+) as a cofactor.

It catalyses the reaction beta-D-fructose 1,6-bisphosphate + H2O = beta-D-fructose 6-phosphate + phosphate. Its pathway is carbohydrate biosynthesis; gluconeogenesis. The sequence is that of Fructose-1,6-bisphosphatase class 3 from Bacillus velezensis (strain DSM 23117 / BGSC 10A6 / LMG 26770 / FZB42) (Bacillus amyloliquefaciens subsp. plantarum).